We begin with the raw amino-acid sequence, 488 residues long: Cysteine desulfurase, mitochondrial (488 aa).

The segment at 25–52 (LPKPLATSSSPATNAPNKTSNPKTGELH) is disordered. Positions 30–47 (ATSSSPATNAPNKTSNPK) are enriched in polar residues. Pyridoxal 5'-phosphate is bound by residues 157–158 (AT), N237, Q265, and 285–287 (SSH). The residue at position 288 (K288) is an N6-(pyridoxal phosphate)lysine. T325 is a pyridoxal 5'-phosphate binding site. C412 (cysteine persulfide intermediate) is an active-site residue. C412 lines the [2Fe-2S] cluster pocket.

It belongs to the class-V pyridoxal-phosphate-dependent aminotransferase family. NifS/IscS subfamily. Pyridoxal 5'-phosphate serves as cofactor.

Its subcellular location is the mitochondrion. The catalysed reaction is (sulfur carrier)-H + L-cysteine = (sulfur carrier)-SH + L-alanine. In terms of biological role, catalyzes the removal of elemental sulfur from cysteine to produce alanine. It supplies the inorganic sulfur for iron-sulfur (Fe-S) clusters. Plays a role in both tRNA-processing and mitochondrial metabolism. Involved in the 2-thio-modification of both 5-carboxymethylaminomethyl-2-thiouridine in mitochondrial tRNAs and 5-methoxycarbonylmethyl-2-thiouridine (mcm5s2U) in cytoplasmic tRNAs. The polypeptide is Cysteine desulfurase, mitochondrial (NFS1) (Candida albicans (strain SC5314 / ATCC MYA-2876) (Yeast)).